A 327-amino-acid chain; its full sequence is Phenylalanine--tRNA ligase alpha subunit (327 aa).

A Mg(2+)-binding site is contributed by Glu252.

It belongs to the class-II aminoacyl-tRNA synthetase family. Phe-tRNA synthetase alpha subunit type 1 subfamily. In terms of assembly, tetramer of two alpha and two beta subunits. Mg(2+) is required as a cofactor.

It localises to the cytoplasm. The enzyme catalyses tRNA(Phe) + L-phenylalanine + ATP = L-phenylalanyl-tRNA(Phe) + AMP + diphosphate + H(+). The chain is Phenylalanine--tRNA ligase alpha subunit from Shewanella amazonensis (strain ATCC BAA-1098 / SB2B).